A 358-amino-acid chain; its full sequence is DNA primase large subunit PriL (358 aa).

[4Fe-4S] cluster is bound by residues Cys-234, Cys-306, Cys-315, and Cys-322. Residues 335–358 (KLDDTDEEELVDWREDEGEEEADA) form a disordered region. The span at 338 to 358 (DTDEEELVDWREDEGEEEADA) shows a compositional bias: acidic residues.

The protein belongs to the eukaryotic-type primase large subunit family. As to quaternary structure, heterodimer of a small subunit (PriS) and a large subunit (PriL). [4Fe-4S] cluster is required as a cofactor.

Its function is as follows. Regulatory subunit of DNA primase, an RNA polymerase that catalyzes the synthesis of short RNA molecules used as primers for DNA polymerase during DNA replication. Stabilizes and modulates the activity of the small subunit, increasing the rate of DNA synthesis, and conferring RNA synthesis capability. The DNA polymerase activity may enable DNA primase to also catalyze primer extension after primer synthesis. May also play a role in DNA repair. In Haloarcula marismortui (strain ATCC 43049 / DSM 3752 / JCM 8966 / VKM B-1809) (Halobacterium marismortui), this protein is DNA primase large subunit PriL.